A 633-amino-acid chain; its full sequence is DNA mismatch repair protein MutL (633 aa).

Disordered stretches follow at residues 337 to 364 (RPDDQLAPPGATSLTEPRPTGAAAGEFG) and 383 to 405 (VGWSGGSSASGGSSGYSAYTRPE). Residues 385–396 (WSGGSSASGGSS) show a composition bias toward gly residues.

Belongs to the DNA mismatch repair MutL/HexB family.

Functionally, this protein is involved in the repair of mismatches in DNA. It is required for dam-dependent methyl-directed DNA mismatch repair. May act as a 'molecular matchmaker', a protein that promotes the formation of a stable complex between two or more DNA-binding proteins in an ATP-dependent manner without itself being part of a final effector complex. The polypeptide is DNA mismatch repair protein MutL (Pseudomonas aeruginosa (strain UCBPP-PA14)).